The chain runs to 708 residues: MKPIKKSITYGRHTLTIETGEIAKQAHGAVIVSMDDTVVLVTAVGDKKTKPGQDFFPLTVDYQEKFYSAGRIPGSFFKREGRPSEKETLTSRLIDRPIRPLFPDGFYNEVQVVAMVLSSDTEIDADIPAMIGTSAALILSGIPFDGPVGAARVGYINNEYILNPTTTQLKESQLNLVVAGTQKAVLMVESEADELSEDVMLGAVTYGHDQMQQVIDMINELADEAGVTAWDWQPAEQDLSLVEKVTQLAEADLRNAFRLKQKSARVEAINEIWQRVFTELKVGTEEGPSEQAVREIGFALEARIVRNSILDGESRIDGRGTRTVRPITIRHGVLPRTHGSALFTRGETQALAITTLGTARDEQKIDALQGDYSERFMLHYNMPPFATGETGRVGTPKRREIGHGRLAKRALLAVIPPVEEFGYSMRVVSEVTESNGSSSMASVCGGCLSLMDAGVPLKAHVAGIAMGLIKEGNRFAVLTDILGDEDHLGDMDFKVAGTEHGITALQMDIKIQGITKEIMQVALLQAKEGRLHILEIMKQSLPIARESISVHAPRIIKFKINPEKIRDVIGKGGAVIRALTEETGTTIDISDDGSVTIACVSSEGGEQARKRIEDITADVEVGRIYEGTVLKLLDFGAIVSVLPGKDGLLHISQIANERVENVADHLKEGQTVRVKVLEADEKGRLRLSMKAASISTEITADNPDNTEK.

Mg(2+) contacts are provided by D486 and D492. The KH domain maps to 553–612; the sequence is PRIIKFKINPEKIRDVIGKGGAVIRALTEETGTTIDISDDGSVTIACVSSEGGEQARKRI. One can recognise an S1 motif domain in the interval 622 to 690; that stretch reads GRIYEGTVLK…EKGRLRLSMK (69 aa).

The protein belongs to the polyribonucleotide nucleotidyltransferase family. Requires Mg(2+) as cofactor.

The protein resides in the cytoplasm. The catalysed reaction is RNA(n+1) + phosphate = RNA(n) + a ribonucleoside 5'-diphosphate. Involved in mRNA degradation. Catalyzes the phosphorolysis of single-stranded polyribonucleotides processively in the 3'- to 5'-direction. This is Polyribonucleotide nucleotidyltransferase from Nitrosomonas europaea (strain ATCC 19718 / CIP 103999 / KCTC 2705 / NBRC 14298).